The chain runs to 569 residues: Glycylpeptide N-tetradecanoyltransferase (569 aa).

The segment covering 1–18 has biased composition (basic and acidic residues); the sequence is MPPTEESKPVDPAQEKQA. Residues 1–82 are disordered; sequence MPPTEESKPV…STESSAEVGL (82 aa). The segment covering 55–68 has biased composition (basic residues); sequence TKKKNKKKSKKKNK. Tetradecanoyl-CoA-binding positions include 158 to 161, 291 to 293, and 299 to 303; these read YKFW, LCI, and GKRLA. Val-569 acts as the Proton acceptor; via carboxylate in catalysis.

The protein belongs to the NMT family. In terms of assembly, monomer.

It is found in the cytoplasm. The catalysed reaction is N-terminal glycyl-[protein] + tetradecanoyl-CoA = N-tetradecanoylglycyl-[protein] + CoA + H(+). In terms of biological role, adds a myristoyl group to the N-terminal glycine residue of certain cellular proteins. This chain is Glycylpeptide N-tetradecanoyltransferase (gtt-1), found in Neurospora crassa (strain ATCC 24698 / 74-OR23-1A / CBS 708.71 / DSM 1257 / FGSC 987).